The primary structure comprises 750 residues: MTIRSPEPEVKIVVERDPIKTSFEKWAQPGHFSRTLAKGPNTTTWIWNLHADAHDFDSHTNDLEDISRKVFSAHFGQLAIILIWLSGMYFHGARFSNYEAWLSDPTHIKPSAQVVWPIVGQEILNGDVGGGFQGIQITSGFFQLWRASGITNELQLYCTAIGALIFAGLMLFAGWFHYHKAAPKLARFQDVESMLNHHLAGLLGLGSLGWAGHQVHVSLPINQLLDAGVDPKEIPLPHEFILNRDLLAQLYPSFAKGLTPFFTSNWSEYADFLTFRGGLNPVTGGLWLTDTAHHHLAIGVLFLVAGHMYRTNWGIGHSIKEILEAHKGPFTGEGHKGLYEILTTSWHAQLALNLAMLGSLTIIVAHHMYSMPPYPYLATDYGTQLSLFTHHMWIGGFLVVGAAAHAAIFMVRDYDPTTQYNNLLDRVLRHRDAIISHLNWVCIFLGFHSFGLYIHNDTMSALGRPQDMFSDTAIQLQPIFAQWIQNTHAFAPSLTAPNATASTSLTWGGGDLIAVGGKVALLPIPLGTADFLVHHIHAFTIHVTVLILLKGVLFARSSRLIPDKANLGFRFPCDGPGRGGTCQVSAWDHVFLGLFWMYNSISIVIFHFSWKMQSDVWGSISDQGVVSHITGGNFAQSATTINGWLRDFLWAQASQVIQSYGSSLSAYGLLFLGAHFVWAFSLMFLFSGRGYWQELIESIVWAHNKLKVAPAIQPRALSIVQGRAVGVAHYLLGGIATTWAFFLARIISVG.

8 helical membrane passes run 70 to 93, 156 to 179, 195 to 219, 291 to 309, 346 to 369, 385 to 411, 433 to 455, and 531 to 549; these read VFSAHFGQLAIILIWLSGMYFHGA, LYCTAIGALIFAGLMLFAGWFHYH, LNHHLAGLLGLGSLGWAGHQVHVSL, TAHHHLAIGVLFLVAGHMY, WHAQLALNLAMLGSLTIIVAHHMY, LSLFTHHMWIGGFLVVGAAAHAAIFMV, AIISHLNWVCIFLGFHSFGLYIH, and FLVHHIHAFTIHVTVLILL. [4Fe-4S] cluster-binding residues include Cys-573 and Cys-582. The next 2 helical transmembrane spans lie at 589–610 and 664–686; these read HVFLGLFWMYNSISIVIFHFSW and LSAYGLLFLGAHFVWAFSLMFLF. Residue His-675 participates in chlorophyll a' binding. The chlorophyll a site is built by Met-683 and Tyr-691. Trp-692 contributes to the phylloquinone binding site. A helical membrane pass occupies residues 724-744; sequence AVGVAHYLLGGIATTWAFFLA.

This sequence belongs to the PsaA/PsaB family. As to quaternary structure, the PsaA/B heterodimer binds the P700 chlorophyll special pair and subsequent electron acceptors. PSI consists of a core antenna complex that captures photons, and an electron transfer chain that converts photonic excitation into a charge separation. The eukaryotic PSI reaction center is composed of at least 11 subunits. P700 is a chlorophyll a/chlorophyll a' dimer, A0 is one or more chlorophyll a, A1 is one or both phylloquinones and FX is a shared 4Fe-4S iron-sulfur center. is required as a cofactor.

It is found in the plastid. It localises to the chloroplast thylakoid membrane. The catalysed reaction is reduced [plastocyanin] + hnu + oxidized [2Fe-2S]-[ferredoxin] = oxidized [plastocyanin] + reduced [2Fe-2S]-[ferredoxin]. In terms of biological role, psaA and PsaB bind P700, the primary electron donor of photosystem I (PSI), as well as the electron acceptors A0, A1 and FX. PSI is a plastocyanin-ferredoxin oxidoreductase, converting photonic excitation into a charge separation, which transfers an electron from the donor P700 chlorophyll pair to the spectroscopically characterized acceptors A0, A1, FX, FA and FB in turn. Oxidized P700 is reduced on the lumenal side of the thylakoid membrane by plastocyanin. The polypeptide is Photosystem I P700 chlorophyll a apoprotein A1 (Angiopteris evecta (Mule's foot fern)).